A 35-amino-acid chain; its full sequence is Trypsin inhibitor 1 (35 aa).

Cystine bridges form between C2/C19, C9/C23, and C18/C34.

Trypsin inhibitor. This is Trypsin inhibitor 1 from Spinacia oleracea (Spinach).